The following is a 306-amino-acid chain: MLPYIALILVCWSVLSQAAQTDVEGRADKRRPIWIMGHMVNAIAQIDEFVNLGANSIETDVSFDDNANPEYTYHGIPCDCGRSCLKWENFNDFLKGLRSATTPGNAKYQAKLILVVFDLKTGSLYDNQANEAGKKLAKNLLKHYWNNGNNGGRAYIVLSIPDLNHYPLIKGFKDQLTQDGHPELMDKVGHDFSGNDAIGDVGNAYKKAGISGHVWQSDGITNCLLRGLDRVKQATANRDSANGFINKVYYWTVDKRATTRDALDAGVDGVMTNYPDVITDVLNESAYKNKFRVASYEDNPWETFKK.

An N-terminal signal peptide occupies residues 1–18 (MLPYIALILVCWSVLSQA). A propeptide spanning residues 19–26 (AQTDVEGR) is cleaved from the precursor. The active site involves His38. Positions 58 and 60 each coordinate Mg(2+). His74 serves as the catalytic Nucleophile. Disulfide bonds link Cys78-Cys84 and Cys80-Cys223. Asp118 is a Mg(2+) binding site. A glycan (N-linked (GlcNAc...) asparagine) is linked at Asn283.

It belongs to the arthropod phospholipase D family. Class II subfamily. Class IIa sub-subfamily. It depends on Mg(2+) as a cofactor. In terms of tissue distribution, expressed by the venom gland.

It is found in the secreted. The catalysed reaction is an N-(acyl)-sphingosylphosphocholine = an N-(acyl)-sphingosyl-1,3-cyclic phosphate + choline. The enzyme catalyses an N-(acyl)-sphingosylphosphoethanolamine = an N-(acyl)-sphingosyl-1,3-cyclic phosphate + ethanolamine. It catalyses the reaction a 1-acyl-sn-glycero-3-phosphocholine = a 1-acyl-sn-glycero-2,3-cyclic phosphate + choline. It carries out the reaction a 1-acyl-sn-glycero-3-phosphoethanolamine = a 1-acyl-sn-glycero-2,3-cyclic phosphate + ethanolamine. In terms of biological role, dermonecrotic toxins cleave the phosphodiester linkage between the phosphate and headgroup of certain phospholipids (sphingolipid and lysolipid substrates), forming an alcohol (often choline) and a cyclic phosphate. This toxin acts on sphingomyelin (SM). It may also act on ceramide phosphoethanolamine (CPE), lysophosphatidylcholine (LPC) and lysophosphatidylethanolamine (LPE), but not on lysophosphatidylserine (LPS), and lysophosphatidylglycerol (LPG). It acts by transphosphatidylation, releasing exclusively cyclic phosphate products as second products. It induces complement-dependent hemolysis, dermonecrosis, vascular permeability and platelet aggregation. The chain is Dermonecrotic toxin LiSicTox-alphaIA2ai from Loxosceles intermedia (Brown spider).